Consider the following 484-residue polypeptide: MFPNSILGRPPFTPNHQQHNNFFALSPSLYSHQQLIDAQFSFHNADLSRAVSLQQLTYGNVSPIQTSTSPLFRGRKRLSDEKNLPLDGKRQRFHSPHQEPTIVNHIVPLSDERRYSMSPLFHTHYVPDIVRCVPPFREISILEPREITLPEAKDKLSQQILELFEACQQQVSDLKKKELCRTELQREIQLLFPQSRLFLVGSSLNGFGTRSSDGDLCLVVKEEPCFFQVNQKTEARHILTLVHKHFCTRLSGYIERPQLIRAKVPIVKFRDKVSCVEFDLNVNNIVGIRNTFLLRTYAYLENRVRPLVLVIKKWASHHDINDASRGTLSSYSLVLMVLHYLQTLPEPILPSIQKIYPESFSPSIQLHLVHQAPCNVPPYLSKNESNLGDLLLGFLKYYATEFDWNSQMISVREAKAIPRPDGIEWRNKYICVEEPFDGTNTARAVHEKQKFDMIKDQFLKSWHRLKNRKDLNSILPLRAAILKR.

Residues Ser-62 and Ser-69 each carry the phosphoserine modification. The short motif at 76–92 is the Nuclear localization signal element; sequence KRLSDEKNLPLDGKRQR. Ser-95 is subject to Phosphoserine. Mg(2+)-binding residues include Asp-213 and Asp-215. In terms of domain architecture, PAP-associated spans 386 to 440; that stretch reads NLGDLLLGFLKYYATEFDWNSQMISVREAKAIPRPDGIEWRNKYICVEEPFDGTN.

This sequence belongs to the DNA polymerase type-B-like family. GLD2 subfamily. As to quaternary structure, interacts with CPEB1, CPEB2, CPSF1 and PABPC1. Interacts with QKI isoform QKI7; promoting recruitment to miRNA miR-122 and miR-122 stabilization. It depends on Mg(2+) as a cofactor. The cofactor is Mn(2+).

Its subcellular location is the cytoplasm. The protein resides in the nucleus. It carries out the reaction RNA(n) + ATP = RNA(n)-3'-adenine ribonucleotide + diphosphate. Functionally, cytoplasmic poly(A) RNA polymerase that adds successive AMP monomers to the 3'-end of specific RNAs, forming a poly(A) tail. In contrast to the canonical nuclear poly(A) RNA polymerase, it only adds poly(A) to selected cytoplasmic mRNAs. Does not play a role in replication-dependent histone mRNA degradation. Adds a single nucleotide to the 3' end of specific miRNAs, monoadenylation stabilizes and prolongs the activity of some but not all miRNAs. The chain is Poly(A) RNA polymerase GLD2 from Bos taurus (Bovine).